A 620-amino-acid polypeptide reads, in one-letter code: Protein NRT1/ PTR FAMILY 2.13 (620 aa).

Positions 1–32 (MVLEDRKDGSSLPGRSGSFSKSSPSELDVVDP) are disordered. A compositionally biased stretch (low complexity) spans 10 to 25 (SSLPGRSGSFSKSSPS). 12 helical membrane-spanning segments follow: residues 70–90 (LGSIGLLANFMVYLTKVFHLE), 95–115 (ANVINIWSGFTNLTPLVGAYI), 126–146 (IAFASFATLLGLITITLTASF), 167–187 (KLQIGVLLLGLCFLSVGSGGI), 213–233 (FFNWYYMTFTVVLIITQTVVV), 241–261 (WIIGFSIPTGLMALAVVMFFA), 364–384 (IVPIWSAGIISLAAMTTQGTF), 402–422 (IPAGSLSVISLLTIGIFLPFY), 443–463 (LQRIGTGIVFAIFSMIVAGIV), 485–505 (VFWLSPQLILMGLCEAFNIIG), 524–544 (SLFSLSFAGSSYLSSFLVTVV), and 568–588 (YFYYLIAVLGVVNLVYFWYCA).

This sequence belongs to the major facilitator superfamily. Proton-dependent oligopeptide transporter (POT/PTR) (TC 2.A.17) family. In terms of assembly, interacts with NLA. Post-translationally, ubiquitinated by NLA. Ubiquitination of NPF2.13 leads to its degradation by the proteasome. Expressed in leaves and flowers. Detected in stems and siliques. Highest expression in the distal lamina of older leaves. Restricted to the sieve element and companion cell complex of the minor vein.

It localises to the cell membrane. Low-affinity proton-dependent nitrate transporter. Not involved in dipeptides transport, but has a weak glucosinolate transport activity. Involved in phloem loading and nitrate remobilization from the older leaves to other tissues. In Arabidopsis thaliana (Mouse-ear cress), this protein is Protein NRT1/ PTR FAMILY 2.13 (NPF2.13).